The sequence spans 216 residues: uncharacterized protein (216 aa).

The protein resides in the plastid. Its subcellular location is the chloroplast. This is an uncharacterized protein from Pyropia yezoensis (Susabi-nori).